The primary structure comprises 153 residues: Ribosomal RNA large subunit methyltransferase H (153 aa).

S-adenosyl-L-methionine is bound by residues Leu75, Gly102, and 121–126 (LSPLTM).

This sequence belongs to the RNA methyltransferase RlmH family. Homodimer.

The protein localises to the cytoplasm. The catalysed reaction is pseudouridine(1915) in 23S rRNA + S-adenosyl-L-methionine = N(3)-methylpseudouridine(1915) in 23S rRNA + S-adenosyl-L-homocysteine + H(+). Functionally, specifically methylates the pseudouridine at position 1915 (m3Psi1915) in 23S rRNA. The protein is Ribosomal RNA large subunit methyltransferase H of Nitratiruptor sp. (strain SB155-2).